Reading from the N-terminus, the 1588-residue chain is Autotransporter adhesin EhaG (1588 aa).

The signal sequence occupies residues 1 to 53 (MNKIFKVIWNPATGNYTVTSETAKSRGKKSGRSKLLISALVAGGMLSSFGALA). Positions 54-1499 (NAGNDNGQGV…QETKQYTDQR (1446 aa)) are surface exposed passenger domain. The segment at 1500–1588 (MVEMDNKLSK…SAALGAGIQW (89 aa)) is translocator domain. A run of 4 beta stranded transmembrane segments spans residues 1534 to 1544 (GASMASIGGGT), 1548 to 1558 (ESAVALGVSMV), 1567 to 1573 (KLQGSTN), and 1577 to 1588 (EYSAALGAGIQW).

This sequence belongs to the autotransporter-2 (AT-2) (TC 1.B.40) family. Homotrimer.

Its subcellular location is the cell surface. The protein resides in the cell outer membrane. Mediates aggregation, biofilm formation and adhesion to a range of extracellular matrix (ECM) proteins, such as fibronectin, fibrinogen, laminin and collagen types I, II, III, and V. Mediates adhesion to intestinal epithelial cells. In Escherichia coli O157:H7, this protein is Autotransporter adhesin EhaG.